The chain runs to 305 residues: Putative beta-lactamase HcpD (305 aa).

An N-terminal signal peptide occupies residues 1–27; it reads MIKSWTKKWFLILFLMASCFGHLVATT. 4 TPR repeats span residues 28–61, 96–133, 168–205, and 240–277; these read GEKYFKMANQALKRGDYHRAVAFYKRSCNLRMGV, HLACASLGSMYEDGDGVQKDFPKAIYYYRRGCHLKGGV, GISCNFVGYMYKSAKGVEKDLKKALANFKRGCHLKDGA, and GSGCHNVAVMYYTGKGAPKDLEKATSYYKKGCALGFSG. Intrachain disulfides connect cysteine 55–cysteine 63, cysteine 91–cysteine 99, cysteine 127–cysteine 135, cysteine 163–cysteine 171, cysteine 199–cysteine 207, cysteine 235–cysteine 243, and cysteine 271–cysteine 279.

It belongs to the hcp beta-lactamase family.

The protein resides in the secreted. The catalysed reaction is a beta-lactam + H2O = a substituted beta-amino acid. Functionally, may hydrolyze 6-aminopenicillinic acid and 7-aminocephalosporanic acid (ACA) derivatives. Binds to penicillin. The polypeptide is Putative beta-lactamase HcpD (hcpD) (Helicobacter pylori (strain J99 / ATCC 700824) (Campylobacter pylori J99)).